The following is a 94-amino-acid chain: MLDLFRVFSNEAKTSKSVAKERLKLVLVHDRVDCSPQLLEMIKTDILKVIANYAEIEDDGLEIKMSKCRGEHDDKPVSALVANIPLKNIKDRCM.

It belongs to the MinE family.

Prevents the cell division inhibition by proteins MinC and MinD at internal division sites while permitting inhibition at polar sites. This ensures cell division at the proper site by restricting the formation of a division septum at the midpoint of the long axis of the cell. In Clostridioides difficile (strain 630) (Peptoclostridium difficile), this protein is Cell division topological specificity factor.